The following is a 329-amino-acid chain: uncharacterized protein (329 aa).

2 coiled-coil regions span residues 57-120 (KKEE…QEVT) and 225-251 (QRQR…GNMM).

This is an uncharacterized protein from Homo sapiens (Human).